The chain runs to 323 residues: Aldo-keto reductase family 1 member C21 (323 aa).

20 to 24 is an NADP(+) binding site; that stretch reads GFGTA. Residue Lys-31 participates in substrate binding. Asp-50 provides a ligand contact to NADP(+). Catalysis depends on Tyr-55, which acts as the Proton donor. His-117 is a binding site for substrate. NADP(+)-binding positions include 166-167, Gln-190, 216-224, and 270-280; these read SN, YGVLGTQRY, and TSLKEERIKEN.

The protein belongs to the aldo/keto reductase family. In terms of assembly, monomer. As to expression, detected in kidney and brain.

The protein localises to the cytoplasm. It catalyses the reaction androsterone + NADP(+) = 5alpha-androstan-3,17-dione + NADPH + H(+). The catalysed reaction is androsterone + NAD(+) = 5alpha-androstan-3,17-dione + NADH + H(+). With respect to regulation, inhibited by high concentrations of substrate. Its function is as follows. NADP-dependent 17-alpha-hydroxysteroid dehydrogenase that converts 5-alpha-androstane-3,17-dione into androsterone. Has lower 3-alpha-hydroxysteroid dehydrogenase activity. Has broad substrate specificity and acts on various 17-alpha-hydroxysteroids, 17-ketosteroids, 3-alpha hydroxysteroids and 3-ketosteroids. Reduction of keto groups is strictly stereoselective. Reduction of 17-ketosteroids yields only 17-alpha-hydroxysteroids. Likewise, reduction of 3-ketosteroids yields only 3-alpha-hydroxysteroids. The sequence is that of Aldo-keto reductase family 1 member C21 (Akr1c21) from Mus musculus (Mouse).